We begin with the raw amino-acid sequence, 95 residues long: MALRPLHDRVIVKRLDNERKTASGIVIPDSAAEKPDQGEVVAVGPGKKTEDGKILPVDLKAGDKVLFGKYAGQTVKVDGEELLVIREDEILAVIQ.

Belongs to the GroES chaperonin family. In terms of assembly, heptamer of 7 subunits arranged in a ring. Interacts with the chaperonin GroEL.

The protein resides in the cytoplasm. Its function is as follows. Together with the chaperonin GroEL, plays an essential role in assisting protein folding. The GroEL-GroES system forms a nano-cage that allows encapsulation of the non-native substrate proteins and provides a physical environment optimized to promote and accelerate protein folding. GroES binds to the apical surface of the GroEL ring, thereby capping the opening of the GroEL channel. The sequence is that of Co-chaperonin GroES from Bordetella bronchiseptica (strain ATCC BAA-588 / NCTC 13252 / RB50) (Alcaligenes bronchisepticus).